We begin with the raw amino-acid sequence, 391 residues long: Phosphoglycerate kinase (391 aa).

Substrate is bound by residues 21 to 23 (DLN), R36, 59 to 62 (HLGR), R113, and R146. ATP is bound by residues K197, E319, and 345–348 (GGDT).

Belongs to the phosphoglycerate kinase family. Monomer.

The protein resides in the cytoplasm. It carries out the reaction (2R)-3-phosphoglycerate + ATP = (2R)-3-phospho-glyceroyl phosphate + ADP. It participates in carbohydrate degradation; glycolysis; pyruvate from D-glyceraldehyde 3-phosphate: step 2/5. This Stenotrophomonas maltophilia (strain R551-3) protein is Phosphoglycerate kinase.